Consider the following 193-residue polypeptide: 3-isopropylmalate dehydratase small subunit (193 aa).

Belongs to the LeuD family. LeuD type 1 subfamily. Heterodimer of LeuC and LeuD.

The enzyme catalyses (2R,3S)-3-isopropylmalate = (2S)-2-isopropylmalate. It functions in the pathway amino-acid biosynthesis; L-leucine biosynthesis; L-leucine from 3-methyl-2-oxobutanoate: step 2/4. Its function is as follows. Catalyzes the isomerization between 2-isopropylmalate and 3-isopropylmalate, via the formation of 2-isopropylmaleate. The protein is 3-isopropylmalate dehydratase small subunit of Bacillus cereus (strain B4264).